The chain runs to 77 residues: Large ribosomal subunit protein bL28 (77 aa).

It belongs to the bacterial ribosomal protein bL28 family.

The chain is Large ribosomal subunit protein bL28 from Laribacter hongkongensis (strain HLHK9).